Consider the following 671-residue polypeptide: Peroxisomal membrane protein PEX17 (671 aa).

8 helical membrane-spanning segments follow: residues 127–147, 187–207, 212–232, 258–278, 318–338, 372–392, 475–495, and 504–524; these read LPLL…GPTL, VPVL…DVAI, FLQV…GTAL, VVAL…HVDI, YLKW…NMLL, FAAY…EYAP, LVEA…NAVV, and MGGV…VLAI.

The protein resides in the peroxisome membrane. Functionally, involved in peroxisome biosynthesis. Required for the import of a subset of matrix proteins into peroxisomes. This chain is Peroxisomal membrane protein PEX17 (PEX17), found in Yarrowia lipolytica (strain CLIB 122 / E 150) (Yeast).